The chain runs to 253 residues: 5'-nucleotidase SurE (253 aa).

4 residues coordinate a divalent metal cation: D8, D9, S39, and N92.

The protein belongs to the SurE nucleotidase family. A divalent metal cation serves as cofactor.

The protein localises to the cytoplasm. It carries out the reaction a ribonucleoside 5'-phosphate + H2O = a ribonucleoside + phosphate. Its function is as follows. Nucleotidase that shows phosphatase activity on nucleoside 5'-monophosphates. This chain is 5'-nucleotidase SurE, found in Burkholderia vietnamiensis (strain G4 / LMG 22486) (Burkholderia cepacia (strain R1808)).